The primary structure comprises 288 residues: Bifunctional protein FolD (288 aa).

NADP(+)-binding positions include 171–173 (GRS), S196, and T237.

The protein belongs to the tetrahydrofolate dehydrogenase/cyclohydrolase family. As to quaternary structure, homodimer.

It catalyses the reaction (6R)-5,10-methylene-5,6,7,8-tetrahydrofolate + NADP(+) = (6R)-5,10-methenyltetrahydrofolate + NADPH. The enzyme catalyses (6R)-5,10-methenyltetrahydrofolate + H2O = (6R)-10-formyltetrahydrofolate + H(+). The protein operates within one-carbon metabolism; tetrahydrofolate interconversion. In terms of biological role, catalyzes the oxidation of 5,10-methylenetetrahydrofolate to 5,10-methenyltetrahydrofolate and then the hydrolysis of 5,10-methenyltetrahydrofolate to 10-formyltetrahydrofolate. The polypeptide is Bifunctional protein FolD (Elusimicrobium minutum (strain Pei191)).